Consider the following 293-residue polypeptide: Indole-3-glycerol phosphate synthase (293 aa).

The protein belongs to the TrpC family.

The catalysed reaction is 1-(2-carboxyphenylamino)-1-deoxy-D-ribulose 5-phosphate + H(+) = (1S,2R)-1-C-(indol-3-yl)glycerol 3-phosphate + CO2 + H2O. The protein operates within amino-acid biosynthesis; L-tryptophan biosynthesis; L-tryptophan from chorismate: step 4/5. This is Indole-3-glycerol phosphate synthase from Prochlorococcus marinus (strain SARG / CCMP1375 / SS120).